A 38-amino-acid polypeptide reads, in one-letter code: Photosystem II reaction center protein M (38 aa).

Residues 7 to 27 (GFVASILFVLVPSVFLIILYI) traverse the membrane as a helical segment.

The protein belongs to the PsbM family. In terms of assembly, PSII is composed of 1 copy each of membrane proteins PsbA, PsbB, PsbC, PsbD, PsbE, PsbF, PsbH, PsbI, PsbJ, PsbK, PsbL, PsbM, PsbT, PsbX, PsbY, PsbZ, Psb30/Ycf12, peripheral proteins PsbO, CyanoQ (PsbQ), PsbU, PsbV and a large number of cofactors. It forms dimeric complexes.

The protein localises to the cellular thylakoid membrane. In terms of biological role, one of the components of the core complex of photosystem II (PSII). PSII is a light-driven water:plastoquinone oxidoreductase that uses light energy to abstract electrons from H(2)O, generating O(2) and a proton gradient subsequently used for ATP formation. It consists of a core antenna complex that captures photons, and an electron transfer chain that converts photonic excitation into a charge separation. This subunit is found at the monomer-monomer interface. The chain is Photosystem II reaction center protein M from Nostoc sp. (strain PCC 7120 / SAG 25.82 / UTEX 2576).